Consider the following 158-residue polypeptide: Transcription elongation factor GreA (158 aa).

Positions 47-68 (AEYDAAKEAQGLLEMRIAKLEE) form a coiled coil.

Belongs to the GreA/GreB family.

In terms of biological role, necessary for efficient RNA polymerase transcription elongation past template-encoded arresting sites. The arresting sites in DNA have the property of trapping a certain fraction of elongating RNA polymerases that pass through, resulting in locked ternary complexes. Cleavage of the nascent transcript by cleavage factors such as GreA or GreB allows the resumption of elongation from the new 3'terminus. GreA releases sequences of 2 to 3 nucleotides. This is Transcription elongation factor GreA from Flavobacterium johnsoniae (strain ATCC 17061 / DSM 2064 / JCM 8514 / BCRC 14874 / CCUG 350202 / NBRC 14942 / NCIMB 11054 / UW101) (Cytophaga johnsonae).